The following is an 814-amino-acid chain: Leucine--tRNA ligase (814 aa).

Positions 42 to 52 (PYPSGNLHIGH) match the 'HIGH' region motif. The short motif at 582–586 (KMSKS) is the 'KMSKS' region element. An ATP-binding site is contributed by K585.

This sequence belongs to the class-I aminoacyl-tRNA synthetase family.

The protein resides in the cytoplasm. It carries out the reaction tRNA(Leu) + L-leucine + ATP = L-leucyl-tRNA(Leu) + AMP + diphosphate. The sequence is that of Leucine--tRNA ligase from Herpetosiphon aurantiacus (strain ATCC 23779 / DSM 785 / 114-95).